Consider the following 339-residue polypeptide: tRNA N6-adenosine threonylcarbamoyltransferase (339 aa).

Fe cation contacts are provided by histidine 111 and histidine 115. Residues leucine 134–glycine 138, aspartate 167, glycine 180, and asparagine 274 contribute to the substrate site. Residue aspartate 302 coordinates Fe cation.

Belongs to the KAE1 / TsaD family. The cofactor is Fe(2+).

It is found in the cytoplasm. It catalyses the reaction L-threonylcarbamoyladenylate + adenosine(37) in tRNA = N(6)-L-threonylcarbamoyladenosine(37) in tRNA + AMP + H(+). Its function is as follows. Required for the formation of a threonylcarbamoyl group on adenosine at position 37 (t(6)A37) in tRNAs that read codons beginning with adenine. Is involved in the transfer of the threonylcarbamoyl moiety of threonylcarbamoyl-AMP (TC-AMP) to the N6 group of A37, together with TsaE and TsaB. TsaD likely plays a direct catalytic role in this reaction. This Methylobacillus flagellatus (strain ATCC 51484 / DSM 6875 / VKM B-1610 / KT) protein is tRNA N6-adenosine threonylcarbamoyltransferase.